Consider the following 616-residue polypeptide: Protein cereblon (616 aa).

3 disordered regions span residues 1–39 (MDEE…DDSV), 63–137 (FGPS…AMPR), and 182–220 (SQER…DIDM). A compositionally biased stretch (low complexity) spans 11-32 (AQEQEVAGSAGEAAAGPSGAEV). The segment covering 96–107 (SEEDIVLDDGTE) has biased composition (acidic residues). Positions 183 to 192 (QERRRSRNSD) are enriched in basic and acidic residues. Residues 194 to 203 (VSPEAEDDEL) are compositionally biased toward acidic residues. Residues 206 to 215 (HPPPPPPRPP) are compositionally biased toward pro residues. The Lon N-terminal domain occupies 257 to 482 (HMLIFLHQYI…LIGGILKEET (226 aa)). One can recognise a CULT domain in the interval 481–590 (ETLFYCRYCN…LAGSSVRIGK (110 aa)). Zn(2+) is bound by residues Cys486, Cys489, Cys555, and Cys558.

This sequence belongs to the CRBN family. In terms of assembly, likely a component of a DCX (DDB1-CUL4-X-box) protein ligase complex. May interact with pic/DDB1. Ubiquitinated.

It localises to the nucleus. It participates in protein modification; protein ubiquitination. Substrate recognition component of a DCX (DDB1-CUL4-X-box) E3 protein ligase complex that mediates the ubiquitination and subsequent proteasomal degradation of target proteins. Has an essential role in mediating growth by negatively regulating insulin signaling. It also has a role in maintaining presynaptic function in the neuromuscular junction synapses of third-instar larvae. The protein is Protein cereblon of Drosophila pseudoobscura pseudoobscura (Fruit fly).